The sequence spans 447 residues: Probable glycine dehydrogenase (decarboxylating) subunit 1 (447 aa).

Belongs to the GcvP family. N-terminal subunit subfamily. In terms of assembly, the glycine cleavage system is composed of four proteins: P, T, L and H. In this organism, the P 'protein' is a heterodimer of two subunits.

It catalyses the reaction N(6)-[(R)-lipoyl]-L-lysyl-[glycine-cleavage complex H protein] + glycine + H(+) = N(6)-[(R)-S(8)-aminomethyldihydrolipoyl]-L-lysyl-[glycine-cleavage complex H protein] + CO2. In terms of biological role, the glycine cleavage system catalyzes the degradation of glycine. The P protein binds the alpha-amino group of glycine through its pyridoxal phosphate cofactor; CO(2) is released and the remaining methylamine moiety is then transferred to the lipoamide cofactor of the H protein. This is Probable glycine dehydrogenase (decarboxylating) subunit 1 from Bacillus cereus (strain G9842).